A 419-amino-acid chain; its full sequence is Putative nickel insertion protein (419 aa).

The interval 69-90 (HDPSNHPSQNTHHHHHHHTRHL) is disordered. Positions 79–88 (THHHHHHHTR) are enriched in basic residues.

This sequence belongs to the LarC family.

The protein is Putative nickel insertion protein of Rippkaea orientalis (strain PCC 8801 / RF-1) (Cyanothece sp. (strain PCC 8801)).